Reading from the N-terminus, the 206-residue chain is Protein GrpE (206 aa).

The segment covering 1–14 (MDKKNEQQEVREEN) has biased composition (basic and acidic residues). Positions 1–56 (MDKKNEQQEVREENDTSINQESETQVELEEEVVNEECETSSEKTDEKEVDDENVTD) are disordered. A compositionally biased stretch (acidic residues) spans 24–39 (TQVELEEEVVNEECET).

It belongs to the GrpE family. Homodimer.

It localises to the cytoplasm. In terms of biological role, participates actively in the response to hyperosmotic and heat shock by preventing the aggregation of stress-denatured proteins, in association with DnaK and GrpE. It is the nucleotide exchange factor for DnaK and may function as a thermosensor. Unfolded proteins bind initially to DnaJ; upon interaction with the DnaJ-bound protein, DnaK hydrolyzes its bound ATP, resulting in the formation of a stable complex. GrpE releases ADP from DnaK; ATP binding to DnaK triggers the release of the substrate protein, thus completing the reaction cycle. Several rounds of ATP-dependent interactions between DnaJ, DnaK and GrpE are required for fully efficient folding. In Clostridioides difficile (strain 630) (Peptoclostridium difficile), this protein is Protein GrpE.